Here is a 258-residue protein sequence, read N- to C-terminus: Isoprenyl transferase 2 (258 aa).

The active site involves D35. D35 contributes to the Mg(2+) binding site. Substrate is bound by residues 36–39, W40, R50, and 81–83; these read GNRR and SDD. The Proton acceptor role is filled by N84. Residues R87, R207, and 213-215 contribute to the substrate site; that span reads RLS. E226 contacts Mg(2+).

The protein belongs to the UPP synthase family. As to quaternary structure, homodimer. Requires Mg(2+) as cofactor.

Its function is as follows. Catalyzes the condensation of isopentenyl diphosphate (IPP) with allylic pyrophosphates generating different type of terpenoids. The polypeptide is Isoprenyl transferase 2 (Streptomyces coelicolor (strain ATCC BAA-471 / A3(2) / M145)).